The primary structure comprises 75 residues: UPF0352 protein VV1_3121 (75 aa).

It belongs to the UPF0352 family.

The sequence is that of UPF0352 protein VV1_3121 from Vibrio vulnificus (strain CMCP6).